Consider the following 224-residue polypeptide: UPF0758 protein Tola_0183 (224 aa).

An MPN domain is found at 102–224 (SLTSPQLVRR…PVSFAERGWL (123 aa)). Zn(2+) contacts are provided by H173, H175, and D186. Residues 173–186 (HNHPSGVAEPSHAD) carry the JAMM motif motif.

Belongs to the UPF0758 family.

The chain is UPF0758 protein Tola_0183 from Tolumonas auensis (strain DSM 9187 / NBRC 110442 / TA 4).